The sequence spans 318 residues: Homeobox protein Nkx-2.5 (318 aa).

The segment at residues 137–196 (RRKPRVLFSQAQVYELERRFKQQRYLSAPERDQLASVLKLTSTQVKIWFQNRRYKCKRQR) is a DNA-binding region (homeobox).

This sequence belongs to the NK-2 homeobox family. Homodimer (via the homeobox); binds DNA as homodimer. Interacts (via the homeobox) with TBX5 (via the T-box); this complex binds DNA. Interacts with HIPK1 and HIPK2, but not HIPK3. Interacts with the C-terminal zinc finger of GATA4 through its homeobox domain. Also interacts with JARID2 which represses its ability to activate transcription of ANF. Interacts with FBLIM1. Interacts with TBX18. Interacts with histone methyltransferase NSD2 (via HMG box). Interacts with NEDD9. Interacts with TBX1. As to expression, predominantly in the adult and embryonic heart, and to a lesser extent in lingual muscle, spleen and stomach.

The protein resides in the nucleus. In terms of biological role, transcription factor required for the development of the heart and the spleen. During heart development, acts as a transcriptional activator of NPPA/ANF in cooperation with GATA4. May cooperate with TBX2 to negatively modulate expression of NPPA/ANF in the atrioventricular canal. Binds to the core DNA motif of NPPA promoter. Together with PBX1, required for spleen development through a mechanism that involves CDKN2B repression. Positively regulates transcription of genes such as COL3A1 and MMP2, resulting in increased pulmonary endothelial fibrosis in response to hypoxia. The polypeptide is Homeobox protein Nkx-2.5 (Nkx2-5) (Mus musculus (Mouse)).